An 803-amino-acid chain; its full sequence is Leucine--tRNA ligase (803 aa).

The 'HIGH' region motif lies at 40–51 (PYPSGAGLHVGH). The 'KMSKS' region motif lies at 575 to 579 (KMSKS). Residue K578 coordinates ATP.

The protein belongs to the class-I aminoacyl-tRNA synthetase family.

The protein localises to the cytoplasm. It carries out the reaction tRNA(Leu) + L-leucine + ATP = L-leucyl-tRNA(Leu) + AMP + diphosphate. In Listeria innocua serovar 6a (strain ATCC BAA-680 / CLIP 11262), this protein is Leucine--tRNA ligase.